The chain runs to 226 residues: MADVLKLDGIRKSYNVGTPVETEVLHGIDLTMQRGDFLALMGPSGSGKSTLLNIIGLLDRPTGGRLLINGEDTGQLSDSALTHLRGHAIGFVFQYHYLISAFTARENVMMPMLVDRGRPDAAMEKRADELLDRVGLSRWRNNSATNMSGGQQQRVAVARALAMDPDLVLADEPTGNLDTKSANDVFELMRQINRERGTTFLLVTHNDDLAERCDRIVRVVDGKIAG.

The 221-residue stretch at 5–225 (LKLDGIRKSY…IVRVVDGKIA (221 aa)) folds into the ABC transporter domain. 42 to 49 (GPSGSGKS) is an ATP binding site.

Belongs to the ABC transporter superfamily. Lipoprotein translocase (TC 3.A.1.125) family. The complex is composed of two ATP-binding proteins (LolD) and two transmembrane proteins (LolC and LolE).

It localises to the cell inner membrane. Functionally, part of the ABC transporter complex LolCDE involved in the translocation of mature outer membrane-directed lipoproteins, from the inner membrane to the periplasmic chaperone, LolA. Responsible for the formation of the LolA-lipoprotein complex in an ATP-dependent manner. The polypeptide is Lipoprotein-releasing system ATP-binding protein LolD 1 (Rhodopseudomonas palustris (strain ATCC BAA-98 / CGA009)).